Consider the following 142-residue polypeptide: Large ribosomal subunit protein uL13 (142 aa).

The protein belongs to the universal ribosomal protein uL13 family. As to quaternary structure, part of the 50S ribosomal subunit.

This protein is one of the early assembly proteins of the 50S ribosomal subunit, although it is not seen to bind rRNA by itself. It is important during the early stages of 50S assembly. The chain is Large ribosomal subunit protein uL13 from Alcanivorax borkumensis (strain ATCC 700651 / DSM 11573 / NCIMB 13689 / SK2).